A 302-amino-acid chain; its full sequence is tRNA pseudouridine synthase B (302 aa).

Asp-42 acts as the Nucleophile in catalysis.

Belongs to the pseudouridine synthase TruB family. Type 1 subfamily.

It carries out the reaction uridine(55) in tRNA = pseudouridine(55) in tRNA. In terms of biological role, responsible for synthesis of pseudouridine from uracil-55 in the psi GC loop of transfer RNAs. This Leifsonia xyli subsp. xyli (strain CTCB07) protein is tRNA pseudouridine synthase B.